A 208-amino-acid polypeptide reads, in one-letter code: Outer-membrane lipoprotein carrier protein (208 aa).

The signal sequence occupies residues 1-24 (MRMNIVQKILSATCFALLPLLAHA).

Belongs to the LolA family. Monomer.

It localises to the periplasm. Its function is as follows. Participates in the translocation of lipoproteins from the inner membrane to the outer membrane. Only forms a complex with a lipoprotein if the residue after the N-terminal Cys is not an aspartate (The Asp acts as a targeting signal to indicate that the lipoprotein should stay in the inner membrane). The sequence is that of Outer-membrane lipoprotein carrier protein from Dechloromonas aromatica (strain RCB).